The following is a 312-amino-acid chain: Small ribosomal subunit protein uS2 (312 aa).

The segment at 232 to 312 (RASGAAERDE…AAPEGEAAAE (81 aa)) is disordered. A compositionally biased stretch (basic and acidic residues) spans 245 to 284 (REGRDDRGDRRDDRRGPRRGDRRDDRRDRGGDRGGDRRGP). Positions 291–312 (AAPVASAEPAAEAAPEGEAAAE) are enriched in low complexity.

The protein belongs to the universal ribosomal protein uS2 family.

The sequence is that of Small ribosomal subunit protein uS2 from Myxococcus xanthus (strain DK1622).